Reading from the N-terminus, the 742-residue chain is Probable serine/threonine-protein kinase PkwA (742 aa).

Positions 16–266 constitute a Protein kinase domain; sequence YRLVSRLGAG…TAELLAQLST (251 aa). ATP is bound by residues 22–30 and lysine 44; that span reads LGAGGMGQV. The active-site Proton acceptor is the aspartate 138. The segment at 266–394 is disordered; that stretch reads TDHTGDDWPP…PWSPPRVQPP (129 aa). Pro residues predominate over residues 301-318; the sequence is EPPPPSHGPPRPSEPLPD. Residues 343–356 are compositionally biased toward basic and acidic residues; that stretch reads LEEKPIQVIHEPER. Pro residues predominate over residues 377 to 392; sequence PRPAAPQPPWSPPRVQ. WD repeat units follow at residues 455-496, 497-538, 539-580, 581-621, 622-663, 664-705, and 706-742; these read ILTT…ELHT, LEGH…ERAV, FEGH…EHAV, LKGH…KERD, VLQA…ALHT, FEGH…EHTT, and LEGH…IATE.

Belongs to the protein kinase superfamily. Ser/Thr protein kinase family.

It catalyses the reaction L-seryl-[protein] + ATP = O-phospho-L-seryl-[protein] + ADP + H(+). The catalysed reaction is L-threonyl-[protein] + ATP = O-phospho-L-threonyl-[protein] + ADP + H(+). In terms of biological role, may play a regulatory role during the complex growth cycle and in secondary metabolite production. This is Probable serine/threonine-protein kinase PkwA (pkwA) from Thermomonospora curvata.